The primary structure comprises 665 residues: mRNA cleavage and polyadenylation factor CLP1 (665 aa).

ATP-binding positions include lysine 91 and 195-200 (SAGKTS). Disordered regions lie at residues 218 to 283 (VKEG…SQAK) and 593 to 615 (PPPR…HDYE). Composition is skewed to basic and acidic residues over residues 219–238 (KEGD…EIHP) and 598–614 (QSKD…HHDY).

The protein belongs to the Clp1 family. Clp1 subfamily. As to quaternary structure, component of a pre-mRNA cleavage factor complex. Interacts directly with PCF11.

The protein resides in the nucleus. Required for endonucleolytic cleavage during polyadenylation-dependent pre-mRNA 3'-end formation. This Malassezia globosa (strain ATCC MYA-4612 / CBS 7966) (Dandruff-associated fungus) protein is mRNA cleavage and polyadenylation factor CLP1.